Here is a 621-residue protein sequence, read N- to C-terminus: Ubiquitin-like-specific protease 1 (621 aa).

Ser2 is modified (N-acetylserine). Ser21 and Ser25 each carry phosphoserine. Disordered stretches follow at residues 116–150 (FDGSEVEASGNSDVESRSSGSRSSDVPYGLRENYS) and 169–196 (RRRIESEGVGTPSTSPISSLASQKSNCD). Residues 124 to 141 (SGNSDVESRSSGSRSSDV) are compositionally biased toward low complexity. A Phosphothreonine modification is found at Thr179. Over residues 179–196 (TPSTSPISSLASQKSNCD) the composition is skewed to polar residues. Ser264 carries the post-translational modification Phosphoserine. The tract at residues 432–621 (NIEITVRDFK…AHLILTDALK (190 aa)) is protease. Active-site residues include His514, Asp531, and Cys580.

Belongs to the peptidase C48 family.

The catalysed reaction is Hydrolysis of the alpha-linked peptide bond in the sequence Gly-Gly-|-Ala-Thr-Tyr at the C-terminal end of the small ubiquitin-like modifier (SUMO) propeptide, Smt3, leading to the mature form of the protein. A second reaction involves the cleavage of an epsilon-linked peptide bond between the C-terminal glycine of the mature SUMO and the lysine epsilon-amino group of the target protein.. In terms of biological role, protease that catalyzes two essential functions in the SUMO pathway: processing of full-length SMT3 to its mature form and deconjugation of SMT3 from targeted proteins. Has an essential role in the G2/M phase of the cell cycle. This is Ubiquitin-like-specific protease 1 (ULP1) from Saccharomyces cerevisiae (strain ATCC 204508 / S288c) (Baker's yeast).